Here is a 245-residue protein sequence, read N- to C-terminus: Endonuclease III (245 aa).

Residues 119 to 138 (MDKLVTLPGVGRKTANVILG) form the HhH domain. Positions 198, 205, 208, and 214 each coordinate [4Fe-4S] cluster.

This sequence belongs to the Nth/MutY family. [4Fe-4S] cluster serves as cofactor.

It catalyses the reaction 2'-deoxyribonucleotide-(2'-deoxyribose 5'-phosphate)-2'-deoxyribonucleotide-DNA = a 3'-end 2'-deoxyribonucleotide-(2,3-dehydro-2,3-deoxyribose 5'-phosphate)-DNA + a 5'-end 5'-phospho-2'-deoxyribonucleoside-DNA + H(+). Functionally, DNA repair enzyme that has both DNA N-glycosylase activity and AP-lyase activity. The DNA N-glycosylase activity releases various damaged pyrimidines from DNA by cleaving the N-glycosidic bond, leaving an AP (apurinic/apyrimidinic) site. The AP-lyase activity cleaves the phosphodiester bond 3' to the AP site by a beta-elimination, leaving a 3'-terminal unsaturated sugar and a product with a terminal 5'-phosphate. Has a preference for oxidized pyrimidines, such as thymine glycol (prefers 5S isomers) 5,6-dihydrouracil:G, 5-hydroxyuracil:G, 5-hydroxycytosine:G and urea:A. Cleaves ssDNA containing an AP site. The chain is Endonuclease III from Mycobacterium tuberculosis (strain ATCC 25618 / H37Rv).